Reading from the N-terminus, the 268-residue chain is Tryptophan synthase alpha chain (268 aa).

Residues glutamate 49 and aspartate 60 each act as proton acceptor in the active site.

This sequence belongs to the TrpA family. In terms of assembly, tetramer of two alpha and two beta chains.

It catalyses the reaction (1S,2R)-1-C-(indol-3-yl)glycerol 3-phosphate + L-serine = D-glyceraldehyde 3-phosphate + L-tryptophan + H2O. Its pathway is amino-acid biosynthesis; L-tryptophan biosynthesis; L-tryptophan from chorismate: step 5/5. In terms of biological role, the alpha subunit is responsible for the aldol cleavage of indoleglycerol phosphate to indole and glyceraldehyde 3-phosphate. The chain is Tryptophan synthase alpha chain from Aeromonas hydrophila subsp. hydrophila (strain ATCC 7966 / DSM 30187 / BCRC 13018 / CCUG 14551 / JCM 1027 / KCTC 2358 / NCIMB 9240 / NCTC 8049).